We begin with the raw amino-acid sequence, 359 residues long: MARITLRQLLDHAAERSYGVPAFNINNMEQGLAIMEAARACDAPVILQVSRGARSYANDIMLAKMMEALEVMYPDIPLCIHQDHGNNVATCLTAIQHGFTSVMMDGSLKEDAKTPADYAYNAMITTEVSRLAHMVGASVEGELGCLGSLETGHGEAEDGHGFEGALDRSQLLTDPDEAARFVAETGVDALAVAIGTSHGAYKFTRKPTGEVLAMDVIEKIHERLPDTHIVMHGSSSVPQEWQDVFNAHGGEMRETYGVPVEEIVRGIRFGVRKVNIDTDLRLAAAAAFRRVADTSRTEFDPRKFLKPAMDAMSAVCKARFEAFGTAGNASRIKVVPMAEMARRYASGSLKPQAKRAEAA.

Position 50 (Ser-50) interacts with D-glyceraldehyde 3-phosphate. Asp-83 (proton donor) is an active-site residue. Residues His-84, Asp-105, Glu-142, and His-198 each coordinate Zn(2+). Gly-199 contacts dihydroxyacetone phosphate. His-232 contacts Zn(2+). Residues 233–235 (GSS) and 275–278 (NIDT) contribute to the dihydroxyacetone phosphate site.

It belongs to the class II fructose-bisphosphate aldolase family. Homodimer. Zn(2+) is required as a cofactor.

It catalyses the reaction beta-D-fructose 1,6-bisphosphate = D-glyceraldehyde 3-phosphate + dihydroxyacetone phosphate. It functions in the pathway carbohydrate biosynthesis; Calvin cycle. The protein operates within carbohydrate degradation; glycolysis; D-glyceraldehyde 3-phosphate and glycerone phosphate from D-glucose: step 4/4. Its function is as follows. Catalyzes the aldol condensation of dihydroxyacetone phosphate (DHAP or glycerone-phosphate) with glyceraldehyde 3-phosphate (G3P) to form fructose 1,6-bisphosphate (FBP) in gluconeogenesis and the reverse reaction in glycolysis. The polypeptide is Fructose-bisphosphate aldolase (cbbA) (Sinorhizobium medicae (strain WSM419) (Ensifer medicae)).